Consider the following 600-residue polypeptide: MIDLMPKKNTFLLKKKYKEDSNNSVINNLFDFFGKEFCFHQITLTGFPIIWIDKTLLIEVGKFLYHLSQPYIMLYDLHGVDERIRLHREDLPKADFSVFYHLISIERNSDIMIKVPLLENDLILPTFTGLFPNANWYERETWDMFGIIFNNHPNLTRIIMPSTWKGHPLRKNYSARATEYEPFFLNEQKEDLEMEGLKFKPELWGMKRKNDNVEFMFLNLGPNHPSAHGAFRIVLQLDGENIVDCVPDIGYHHRGAEKMAERQSWHSYIPYTDRIEYLGGCVNELPYVLAVEKLANISVPEKAEVIRVMMSELFRINSHLLYISTFIQDVGCMTPVFFAFTDRQKIYDLIEAITGARMHPAWFRIGGVANDLPQGWNILLKEFLDWMPKRLKYYINTALKNSILIHRSKGIAEYNKKEALQWGVTGAGLRATGLNFDVRKWRPYSGYQNYTFEVPVGSGISDCYSRVMIKVEEIYQSLFILKQCLCNMPSGPFKSEDSLTTPPSKECVFQNIETMITHFLQVSWGPVIPENESFQMIEATKGINSYYLISDGGTMSYRTRIRTPSFPHLQQIPSVIRGSLISDLIVYLGSIDFVMSDVDR.

An NADH dehydrogenase I subunit C region spans residues 1-190 (MIDLMPKKNT…EPFFLNEQKE (190 aa)). The NADH dehydrogenase I subunit D stretch occupies residues 214–600 (EFMFLNLGPN…IDFVMSDVDR (387 aa)).

It in the N-terminal section; belongs to the complex I 30 kDa subunit family. In the C-terminal section; belongs to the complex I 49 kDa subunit family. As to quaternary structure, NDH-1 is composed of 13 different subunits. Subunits NuoB, CD, E, F, and G constitute the peripheral sector of the complex.

It localises to the cell membrane. It catalyses the reaction a quinone + NADH + 5 H(+)(in) = a quinol + NAD(+) + 4 H(+)(out). NDH-1 shuttles electrons from NADH, via FMN and iron-sulfur (Fe-S) centers, to quinones in the respiratory chain. The immediate electron acceptor for the enzyme in this species is believed to be ubiquinone. Couples the redox reaction to proton translocation (for every two electrons transferred, four hydrogen ions are translocated across the cytoplasmic membrane), and thus conserves the redox energy in a proton gradient. This chain is NADH-quinone oxidoreductase subunit C/D, found in Buchnera aphidicola subsp. Acyrthosiphon pisum (strain 5A).